We begin with the raw amino-acid sequence, 296 residues long: 5'-3' exonuclease (296 aa).

One can recognise a 5'-3' exonuclease domain in the interval 175–262 (VMPKALIDIK…VPLACTLKDA (88 aa)).

Its function is as follows. 5'-3' exonuclease acting preferentially on double-stranded DNA. The sequence is that of 5'-3' exonuclease (ypcP) from Bacillus subtilis (strain 168).